The chain runs to 301 residues: EVKLSGDARMGVMYNGDDWNFSSRSRVLFTMSGTTDSGLEFGASFKAHESVGAETGEDGTVFLSGAFGKIEMGDALGASEALFGDLYEVGYTDLDDRGGNDIPYLTGDERLTAEDNPVLLYTYSAGAFSVAASMSDGKVGETSEDDAQEMAVAAAYTFGNYTVGLGYEKIDSPDTALMADMEQLELAAIAKFGATNVKAYYADGELDRDFARAVFDLTPVAAAATAVDHKAYGLSVDSTFGATTVGGYVQVLDIDTIDDVTYYGLGASYDLGGGASIVGGIADNDLPNSDMVADLGVKFKF.

In terms of assembly, homotrimer.

The protein localises to the cell outer membrane. Functionally, forms channels that allow the passive diffusion of small hydrophilic solutes up to an exclusion limit of about 0.6 kDa. This Rhodobacter capsulatus (Rhodopseudomonas capsulata) protein is Porin.